Here is a 72-residue protein sequence, read N- to C-terminus: Large ribosomal subunit protein bL31c (72 aa).

This sequence belongs to the bacterial ribosomal protein bL31 family. Type A subfamily. In terms of assembly, part of the 50S ribosomal subunit.

Its subcellular location is the plastid. The protein localises to the chloroplast. Binds the 23S rRNA. The chain is Large ribosomal subunit protein bL31c (rpl31) from Thalassiosira pseudonana (Marine diatom).